A 321-amino-acid polypeptide reads, in one-letter code: Lipoyl synthase (321 aa).

[4Fe-4S] cluster is bound by residues cysteine 68, cysteine 73, cysteine 79, cysteine 94, cysteine 98, cysteine 101, and serine 308. Positions 80 to 297 (FNHGTATFMI…KEVALELGFT (218 aa)) constitute a Radical SAM core domain.

The protein belongs to the radical SAM superfamily. Lipoyl synthase family. [4Fe-4S] cluster is required as a cofactor.

It is found in the cytoplasm. The enzyme catalyses [[Fe-S] cluster scaffold protein carrying a second [4Fe-4S](2+) cluster] + N(6)-octanoyl-L-lysyl-[protein] + 2 oxidized [2Fe-2S]-[ferredoxin] + 2 S-adenosyl-L-methionine + 4 H(+) = [[Fe-S] cluster scaffold protein] + N(6)-[(R)-dihydrolipoyl]-L-lysyl-[protein] + 4 Fe(3+) + 2 hydrogen sulfide + 2 5'-deoxyadenosine + 2 L-methionine + 2 reduced [2Fe-2S]-[ferredoxin]. Its pathway is protein modification; protein lipoylation via endogenous pathway; protein N(6)-(lipoyl)lysine from octanoyl-[acyl-carrier-protein]: step 2/2. Catalyzes the radical-mediated insertion of two sulfur atoms into the C-6 and C-8 positions of the octanoyl moiety bound to the lipoyl domains of lipoate-dependent enzymes, thereby converting the octanoylated domains into lipoylated derivatives. The sequence is that of Lipoyl synthase from Vibrio cholerae serotype O1 (strain ATCC 39315 / El Tor Inaba N16961).